Reading from the N-terminus, the 2135-residue chain is Plexin-B1 (2135 aa).

Positions methionine 1–threonine 19 are cleaved as a signal peptide. The Sema domain occupies leucine 20–valine 479. The Extracellular segment spans residues leucine 20 to glutamine 1490. An N-linked (GlcNAc...) asparagine glycan is attached at asparagine 31. Cystine bridges form between cysteine 79-cysteine 88, cysteine 111-cysteine 119, cysteine 252-cysteine 377, cysteine 268-cysteine 322, cysteine 340-cysteine 364, cysteine 482-cysteine 499, cysteine 488-cysteine 533, cysteine 491-cysteine 508, and cysteine 502-cysteine 514. A glycan (N-linked (GlcNAc...) asparagine) is linked at asparagine 334. N-linked (GlcNAc...) asparagine glycosylation is present at asparagine 543. Cysteine 570 and cysteine 588 are joined by a disulfide. 2 disordered regions span residues methionine 671–proline 829 and leucine 849–proline 884. Residues serine 681–alanine 697 show a composition bias toward pro residues. 2 stretches are compositionally biased toward low complexity: residues proline 698–proline 710 and serine 734–proline 754. 3 consecutive IPT/TIG domains span residues proline 1070 to glutamine 1160, proline 1162 to threonine 1249, and proline 1252 to glutamate 1375. Residues asparagine 1183, asparagine 1253, and asparagine 1330 are each glycosylated (N-linked (GlcNAc...) asparagine). A helical membrane pass occupies residues valine 1491–tyrosine 1511. Positions isoleucine 1507–arginine 1539 form a coiled coil. Residues arginine 1512–leucine 2135 are Cytoplasmic-facing. The interval proline 1883–arginine 1908 is disordered. Residues lysine 1888 to arginine 1897 are compositionally biased toward basic and acidic residues.

The protein belongs to the plexin family. As to quaternary structure, monomer, and heterodimer with PLXNB2 after proteolytic processing. Binds RAC1 that has been activated by GTP binding. Interaction with SEMA4D promotes binding of cytoplasmic ligands. Interacts with PLXNA1. Interacts with ARHGEF11 and ARHGEF12. Interacts with ERBB2. Interacts with MET. Interacts with MST1R. Interacts with RRAS. Interacts with RHOD. Interacts with RND1. Interacts with NRP1 and NRP2. In terms of processing, phosphorylated on tyrosine residues by ERBB2 and MET upon SEMA4D binding. Proteolytic processing favors heterodimerization with PLXNB2 and SEMA4D binding. Highly expressed in fetal kidney, and at slightly lower levels in fetal brain, lung and liver.

It is found in the cell membrane. The protein resides in the secreted. Functionally, receptor for SEMA4D. Plays a role in GABAergic synapse development. Mediates SEMA4A- and SEMA4D-dependent inhibitory synapse development. Plays a role in RHOA activation and subsequent changes of the actin cytoskeleton. Plays a role in axon guidance, invasive growth and cell migration. The sequence is that of Plexin-B1 (PLXNB1) from Homo sapiens (Human).